We begin with the raw amino-acid sequence, 55 residues long: Spermatid nuclear transition protein 1 (55 aa).

The span at 1–42 (MSTSRKLKSQGTRRGKNRTPHKGVKRGCSKRKYRKSSLKSRK) shows a compositional bias: basic residues. Residues 1–55 (MSTSRKLKSQGTRRGKNRTPHKGVKRGCSKRKYRKSSLKSRKRCDDANRNFRSHL) form a disordered region. Residues S9, S36, S37, and S40 each carry the phosphoserine modification.

The protein belongs to the nuclear transition protein 1 family. Testis.

The protein resides in the nucleus. Its subcellular location is the chromosome. Plays a key role in the replacement of histones to protamine in the elongating spermatids of mammals. In condensing spermatids, loaded onto the nucleosomes, where it promotes the recruitment and processing of protamines, which are responsible for histone eviction. This chain is Spermatid nuclear transition protein 1 (TNP1), found in Ovis aries (Sheep).